Reading from the N-terminus, the 896-residue chain is MSKLTPMMQQYQSIKNKYKDAILFFRLGDFYEMFNDDAKIAARELDLALTARNKGGGEKAPMAGVPCHSAESYIAKLLEKGYKVAICEQIEDPSEAKGLVSREVVRIITPGTIIENEMLKDKENNYLASAICYKDHLGFSYVDISTGEFYVTQFSQKFSDKVWDELDRIQPREVIICKELEETENFADKKKQMNFVYNYSRIEKVKAAYNFLLEHFKTNSLSGFGCEDKPAAILAAGEIINFLKDTQKRTLEHINRITTYNLTDYMVLDSATRYNLELTSTIRGNKHKGSLLNVLDQTITSMGGRLIKKWINQPLIDRNKIETRLDAVEELVNNYLLLQEIREHLKGIYDLERILGKVSYGSANARDLAALKYSILKLPQIKKDLEQLNTKLFKNMHETFDPLIDLAGLLDRSIVDEPPVSVREGGLIKDGYSSELDELRKARTEGKDWIANLQKTERERTGISSLKVGFNKVFGYYIEITKANLDRVPDNYTRKQTLSNSERFITPELKEKEALVLGAEEKINDLEYKLFVKIRDIVRDNIKRIKKTAAIISKLDVLTSLAQNALERDYNRPRINNDGVIEIIKGRHPVVEDMGKGAFVPNDTYLDLEEERFIIITGPNMSGKSTYMRQVALIVLMAQMGSFVPADKATIGIVDRIFTRVGASDDLTTGQSTFMVEMNEVANIVNNATRNSLIILDEVGRGTSTYDGLSIAWAVSEYINNPDRIGARTLFATHYHELTQLENRPGIKNYNVLVEEDEDGVHFLHKIIPGKASESYGIEVAQLAGLPMEIIIRAQEILAELEKKGKESTKTGKGENKNISHKTESDLINNIHESDKEYLTKRNTNDKVQQLPLFKSEYRVIEKIKNKDIVNMTPMEAINFLFEIQKELKEKGENYA.

618-625 is an ATP binding site; sequence GPNMSGKS. The span at 805-825 shows a compositional bias: basic and acidic residues; it reads GKESTKTGKGENKNISHKTES. The tract at residues 805 to 826 is disordered; sequence GKESTKTGKGENKNISHKTESD.

This sequence belongs to the DNA mismatch repair MutS family.

This protein is involved in the repair of mismatches in DNA. It is possible that it carries out the mismatch recognition step. This protein has a weak ATPase activity. The chain is DNA mismatch repair protein MutS from Halothermothrix orenii (strain H 168 / OCM 544 / DSM 9562).